A 2726-amino-acid polypeptide reads, in one-letter code: Filamin-C (2726 aa).

The segment at 1–260 (MMNNSNYSDA…VMTYLSQFPK (260 aa)) is actin-binding. Position 5 is a phosphoserine (S5). Calponin-homology (CH) domains are found at residues 37 to 143 (KIQQ…LHYS) and 160 to 263 (QTPK…KAKL). 15 Filamin repeats span residues 271 to 369 (SKQL…EVNV), 371 to 469 (MALG…PVHV), 470 to 566 (AEAC…EVQV), 567 to 659 (SPEA…IAHI), 663 to 759 (PPDC…RVNV), 760 to 862 (GEGS…HIKV), 863 to 961 (DPSH…VVNV), 962 to 1057 (APPL…AVEG), 1058 to 1150 (VLPP…KATI), 1151 to 1245 (QPVF…RVHV), 1246 to 1345 (QPAV…RVGV), 1346 to 1438 (TEGC…RVPV), 1439 to 1534 (KDVV…KIKV), 1535 to 1631 (LPSH…RIHA), and 1636 to 1735 (DASK…HVLA). R1003 bears the Omega-N-methylarginine mark. 2 positions are modified to phosphoserine: S1162 and S1339. A hinge 1 region spans residues 1736–1759 (CDPLPHVEEPAEMLQMRQPYAPLR). Filamin repeat units follow at residues 1760-1855 (PGTC…QFYV), 1856-1947 (DAIN…TAKI), 1948-2034 (TGDD…KILV), and 2037-2129 (SEIG…TVKV). S2043 is modified (phosphoserine). The intradomain insert; mediate targeting to Z lines stretch occupies residues 2163–2244 (GNWFQMVSAQ…FGSITRQQEG (82 aa)). A compositionally biased stretch (basic and acidic residues) spans 2193 to 2210 (EISKTRGGETKREVRVEE). The interval 2193–2214 (EISKTRGGETKREVRVEESTQV) is disordered. One copy of the Filamin 20; mediates interaction with XIRP1 repeat lies at 2212 to 2307 (TQVGGDPFPA…VPGSPFQFTV (96 aa)). A phosphoserine mark is found at S2234 and S2237. The residue at position 2239 (T2239) is a Phosphothreonine. Residues 2241–2260 (QQEGEASSQDMTAQVTSPSG) are compositionally biased toward polar residues. Residues 2241–2261 (QQEGEASSQDMTAQVTSPSGK) form a disordered region. Filamin repeat units follow at residues 2310-2402 (LGEG…VVPV), 2404-2497 (SLSD…KIRV), and 2501-2593 (SQAG…KAKV). Residues 2404–2725 (SLSDDARRLT…VPGSPFKVNV (322 aa)) form an interaction with INPPL1 region. S2587, S2618, S2621, S2633, S2715, and S2719 each carry phosphoserine. Positions 2594-2630 (TGPRLSGGHSLHETSTVLVETVTKSSSSRGASYSSIP) are hinge 2. The tract at residues 2594–2726 (TGPRLSGGHS…PGSPFKVNVP (133 aa)) is self-association site, tail. One copy of the Filamin 24 repeat lies at 2631 to 2725 (KFSSDASKVV…VPGSPFKVNV (95 aa)).

Belongs to the filamin family. Homodimer; the filamin repeat 24 and the second hinge domain are important for dimer formation. Interacts with FLNB, INPPL1, ITGB1A, KCND2, MYOT, MYOZ1 and MYOZ3. Interacts with sarcoglycans SGCD and SGCG. Interacts (via filament repeats 17-18, 20-21 and 24) with USP25 (isoform USP25m only). Interacts with FBLIM1. Interacts with XIRP1; this interaction is mediated by filamin 20 repeat. Interacts with KY. Interacts with IGFN1. Interacts with MICALL2. Interacts with ANK3. Interacts with MICALL2. Interacts with ANK3. Interacts with SYNPO2. Ubiquitinated by FBXL22, leading to proteasomal degradation.

It localises to the cytoplasm. It is found in the membrane. The protein localises to the cytoskeleton. Its subcellular location is the myofibril. The protein resides in the sarcomere. It localises to the z line. In terms of biological role, muscle-specific filamin, which plays a central role in sarcomere assembly and organization. Critical for normal myogenesis, it probably functions as a large actin-cross-linking protein with structural functions at the Z lines in muscle cells. May be involved in reorganizing the actin cytoskeleton in response to signaling events. The sequence is that of Filamin-C (Flnc) from Mus musculus (Mouse).